Here is a 343-residue protein sequence, read N- to C-terminus: Anthranilate phosphoribosyltransferase (343 aa).

Residues G85, 88 to 89 (GD), T93, 95 to 98 (NIST), 113 to 121 (KHGGRSVSS), and A125 contribute to the 5-phospho-alpha-D-ribose 1-diphosphate site. Residue G85 participates in anthranilate binding. Mg(2+) is bound at residue S97. R171 contacts anthranilate. Mg(2+) is bound by residues D230 and E231.

This sequence belongs to the anthranilate phosphoribosyltransferase family. Homodimer. It depends on Mg(2+) as a cofactor.

It catalyses the reaction N-(5-phospho-beta-D-ribosyl)anthranilate + diphosphate = 5-phospho-alpha-D-ribose 1-diphosphate + anthranilate. It functions in the pathway amino-acid biosynthesis; L-tryptophan biosynthesis; L-tryptophan from chorismate: step 2/5. Its function is as follows. Catalyzes the transfer of the phosphoribosyl group of 5-phosphorylribose-1-pyrophosphate (PRPP) to anthranilate to yield N-(5'-phosphoribosyl)-anthranilate (PRA). The sequence is that of Anthranilate phosphoribosyltransferase from Aromatoleum aromaticum (strain DSM 19018 / LMG 30748 / EbN1) (Azoarcus sp. (strain EbN1)).